Consider the following 151-residue polypeptide: Small ribosomal subunit protein uS15 (151 aa).

A disordered region spans residues Met-1–Thr-20.

The protein belongs to the universal ribosomal protein uS15 family. Part of the 30S ribosomal subunit.

The chain is Small ribosomal subunit protein uS15 from Methanococcus aeolicus (strain ATCC BAA-1280 / DSM 17508 / OCM 812 / Nankai-3).